We begin with the raw amino-acid sequence, 223 residues long: MKRN2 opposite strand protein (223 aa).

This is MKRN2 opposite strand protein (MKRN2OS) from Homo sapiens (Human).